The chain runs to 2131 residues: Sodium channel protein para (2131 aa).

Residues 1–148 (MTEDSDSISE…FNPIRRVAIY (148 aa)) are Cytoplasmic-facing. Residues 35-48 (HEKQKELERKRAEG) show a composition bias toward basic and acidic residues. Residues 35-84 (HEKQKELERKRAEGEVPQYGRKKKQKEIRYDDEDEDEGPQPDPTLEQGVP) are disordered. Acidic residues predominate over residues 64–73 (YDDEDEDEGP). The I repeat unit spans residues 134 to 467 (WMLDPFNPIR…AAKAAKLEER (334 aa)). The chain crosses the membrane as a helical span at residues 149 to 172 (ILVHPLFSLFIITTILVNCILMIM). Over 173-180 (PTTPTVES) the chain is Extracellular. The helical transmembrane segment at 181-199 (TEVIFTGIYTFESAVKVMA) threads the bilayer. Topologically, residues 200–212 (RGFILCPFTYLRD) are cytoplasmic. Residues 213–231 (AWNWLDFVVIALAYVTMGI) traverse the membrane as a helical segment. Residues 232 to 237 (DLGNLA) are Extracellular-facing. A helical; Voltage-sensor transmembrane segment spans residues 238 to 257 (ALRTFRVLRALKTVAIVPGL). At 258–273 (KTIVGAVIESVKNLRD) the chain is on the cytoplasmic side. A helical membrane pass occupies residues 274 to 297 (VIILTMFSLSVFALMGLQIYMGVL). Residues 298 to 373 (TQKCIKKFPL…PNYGYTSFDS (76 aa)) are Extracellular-facing. A disulfide bond links Cys301 and Cys350. N-linked (GlcNAc...) asparagine glycans are attached at residues Asn313, Asn325, and Asn343. An intramembrane region (pore-forming) is located at residues 374–398 (FGWAFLSAFRLMTQDFWEDLYQLVL). The Extracellular portion of the chain corresponds to 399–405 (RAAGPWH). A helical transmembrane segment spans residues 406–427 (MLFFIVIIFLGSFYLVNLILAI). Over 428 to 812 (VAMSYDELQK…VWLKFQEWVS (385 aa)) the chain is Cytoplasmic. Phosphoserine; by PKA is present on residues Ser553 and Ser570. Disordered stretches follow at residues 553 to 572 (STTS…GSRS) and 671 to 691 (KESK…TNGG). Over residues 680–691 (TRNQSVGATNGG) the composition is skewed to polar residues. An II repeat occupies 799-1069 (DCCWVWLKFQ…IAEAFNRIGR (271 aa)). The chain crosses the membrane as a helical span at residues 813–837 (LIVFDPFVELFITLCIVVNTMFMAM). Topologically, residues 838–848 (DHHDMNKEMER) are extracellular. The chain crosses the membrane as a helical span at residues 849 to 873 (VLKSGNYFFTATFAIEATMKLMAMS). Topologically, residues 874-880 (PKYYFQE) are cytoplasmic. Residues 881–900 (GWNIFDFIIVALSLLELGLE) traverse the membrane as a helical segment. The Extracellular segment spans residues 901–906 (GVQGLS). Residues 907–926 (VLRSFRLLRVFKLAKSWPTL) traverse the membrane as a helical; Voltage-sensor segment. The Cytoplasmic portion of the chain corresponds to 927–941 (NLLISIMGRTMGALG). Residues 942–963 (NLTFVLCIIIFIFAVMGMQLFG) form a helical membrane-spanning segment. The Extracellular portion of the chain corresponds to 964–985 (KNYHDHKDRFPDGDLPRWNFTD). Asn982 is a glycosylation site (N-linked (GlcNAc...) asparagine). Residues 986-1006 (FMHSFMIVFRVLCGEWIESMW) constitute an intramembrane region (pore-forming). Residues 1007–1013 (DCMYVGD) lie on the Extracellular side of the membrane. Cys1008 and Cys1016 are oxidised to a cystine. Residues 1014-1041 (VSCIPFFLATVVIGNLVVLNLFLALLLS) form a helical membrane-spanning segment. The Cytoplasmic segment spans residues 1042–1296 (NFGSSSLSAP…WGNLRLKTFQ (255 aa)). The tract at residues 1166 to 1240 (DMKNNKPKKS…LDEEGECEEG (75 aa)) is disordered. The segment covering 1177 to 1194 (YLNNATDDDTASINSYGS) has biased composition (polar residues). A compositionally biased stretch (basic and acidic residues) spans 1199–1225 (PFKDESHKGSAETMEGEEKRDASKEDL). Over residues 1226-1240 (GLDEELDEEGECEEG) the composition is skewed to acidic residues. One copy of the III repeat lies at 1284–1591 (WQGWGNLRLK…QKKYYNAMKK (308 aa)). The chain crosses the membrane as a helical span at residues 1297 to 1320 (LIENKYFETAVITMILMSSLALAL). Topologically, residues 1321-1334 (EDVHLPQRPILQDI) are extracellular. A helical transmembrane segment spans residues 1335-1359 (LYYMDRIFTVIFFLEMLIKWLALGF). Residues 1360–1365 (KVYFTN) lie on the Cytoplasmic side of the membrane. Residues 1366–1387 (AWCWLDFVIVMVSLINFVASLV) form a helical membrane-spanning segment. Residues 1388-1391 (GAGG) lie on the Extracellular side of the membrane. A helical; Voltage-sensor transmembrane segment spans residues 1392–1413 (IQAFKTMRTLRALRPLRAMSRM). Residues 1414-1432 (QGMRVVVNALVQAIPSIFN) are Cytoplasmic-facing. Residues 1433–1454 (VLLVCLIFWLIFAIMGVQLFAG) form a helical membrane-spanning segment. Over 1455–1495 (KYFKCEDMNGTKLSHEIIPNRNACESENYTWVNSAMNFDHV) the chain is Extracellular. Asn1463 and Asn1482 each carry an N-linked (GlcNAc...) asparagine glycan. The pore-forming intramembrane region spans 1496-1517 (GNAYLCLFQVATFKGWIQIMND). Over 1518–1533 (AIDSREVDKQPIRETN) the chain is Extracellular. The chain crosses the membrane as a helical span at residues 1534-1560 (IYMYLYFVFFIIFGSFFTLNLFIGVII). Residues 1561–1614 (DNFNEQKKKAGGSLEMFMTEDQKKYYNAMKKMGSKKPLKAIPRPRWRPQAIVFE) are Cytoplasmic-facing. An IV repeat occupies 1601–1862 (IPRPRWRPQA…NMYIAVILEN (262 aa)). A helical membrane pass occupies residues 1615 to 1638 (IVTDKKFDIIIMLFIGLNMFTMTL). Topologically, residues 1639 to 1649 (DRYDASDTYNA) are extracellular. The helical transmembrane segment at 1650 to 1673 (VLDYLNAIFVVIFSSECLLKIFAL) threads the bilayer. Residues 1674 to 1679 (RYHYFI) are Cytoplasmic-facing. The helical transmembrane segment at 1680–1703 (EPWNLFDVVVVILSILGLVLSDII) threads the bilayer. Residues 1704-1713 (EKYFVSPTLL) are Extracellular-facing. Residues 1714-1735 (RVVRVAKVGRVLRLVKGAKGIR) form a helical; Voltage-sensor membrane-spanning segment. The Cytoplasmic segment spans residues 1736–1750 (TLLFALAMSLPALFN). The chain crosses the membrane as a helical span at residues 1751-1773 (ICLLLFLVMFIFAIFGMSFFMHV). The Extracellular portion of the chain corresponds to 1774-1787 (KEKSGINDVYNFKT). The segment at residues 1788-1810 (FGQSMILLFQMSTSAGWDGVLDA) is an intramembrane region (pore-forming). At 1811-1835 (IINEEACDPPDNDKGYPGNCGSATV) the chain is on the extracellular side. Residues 1836-1860 (GITFLLSYLVISFLIVINMYIAVIL) form a helical membrane-spanning segment. Topologically, residues 1861–2131 (ENYSQATEDV…PSITSRTADV (271 aa)) are cytoplasmic. An EF-hand domain is found at 1877–1912 (DDYDMYYEIWQQFDPEGTQYIRYDQLSEFLDVLEPP). The segment at 2001–2096 (HKARGEGGGS…GSPGAGSAGR (96 aa)) is disordered. A compositionally biased stretch (acidic residues) spans 2021-2035 (GDPDAGDPAPDEATD). The segment covering 2068–2088 (AAAAAAAAAAAAAAGTTTAGS) has biased composition (low complexity).

The protein belongs to the sodium channel (TC 1.A.1.10) family. Para subfamily.

The protein resides in the cell membrane. Its function is as follows. Mediates the voltage-dependent sodium ion permeability of excitable membranes. Assuming opened or closed conformations in response to the voltage difference across the membrane, the protein forms a sodium-selective channel through which Na(+) ions may pass in accordance with their electrochemical gradient. The polypeptide is Sodium channel protein para (para) (Drosophila melanogaster (Fruit fly)).